An 808-amino-acid polypeptide reads, in one-letter code: Beta-catenin/armadillo-related protein 1 (808 aa).

An involved in transcriptional activation region spans residues 1 to 85 (MDLDPNLVIN…SSHLSGMSSM (85 aa)). 3 ARM repeats span residues 118 to 160 (RAIP…NETK), 165 to 209 (CVIF…RAIS), and 369 to 408 (SDVP…NLVA). The segment at 541 to 808 (NVQDVIEGVR…DQYPYRQGRF (268 aa)) is involved in transcriptional activation. Residues 702-808 (TYEGAGEQWS…DQYPYRQGRF (107 aa)) are disordered. The span at 723–736 (YCNSSGRDSSKTYN) shows a compositional bias: polar residues. A compositionally biased stretch (low complexity) spans 737–750 (SPMYHSPPSMYPEY). Residues 786-798 (NIPSNQGPSSHLS) show a composition bias toward polar residues.

This sequence belongs to the beta-catenin family. Interacts with apr-1, axl-1, daf-16, lin-23, and pop-1 (via acidic region in N-terminus 1-44). Interacts (via ARM repeats) with pry-1.

Its subcellular location is the cytoplasm. The protein resides in the nucleus. It localises to the membrane. The protein localises to the cell junction. Participates in the Wnt signaling pathway which affects cell fate and may regulate the stem cell divisions of seam cells during larval development. Functions as a transcriptional activator but is dependent on the interaction with pop-1. Involved in maintaining lin-39 Hox expression and regulating glr-1 abundance at the synapses. Required for mab-5 expression during Q neuroblast migration and for oxidative stress-induced daf-16 signaling. Has roles in egg laying, vulva precursor cell fate determination, Q neuroblast migration, posterior ectodermal cell P12 specification, movement, body length, male tail development and dauer induction. Functionally redundant to wrm-1 and hmp-2. The chain is Beta-catenin/armadillo-related protein 1 (bar-1) from Caenorhabditis briggsae.